The following is a 948-amino-acid chain: RNA polymerase-associated protein RapA (948 aa).

A Helicase ATP-binding domain is found at 164–332 (EVADRIAPRV…FARLRLLDPN (169 aa)). 177–184 (DEVGLGKT) serves as a coordination point for ATP. The short motif at 278–281 (DEAH) is the DEAH box element. Residues 473–627 (RVEWLIDQLK…TCPTGNALQH (155 aa)) enclose the Helicase C-terminal domain.

It belongs to the SNF2/RAD54 helicase family. RapA subfamily. Interacts with the RNAP. Has a higher affinity for the core RNAP than for the holoenzyme. Its ATPase activity is stimulated by binding to RNAP.

Its function is as follows. Transcription regulator that activates transcription by stimulating RNA polymerase (RNAP) recycling in case of stress conditions such as supercoiled DNA or high salt concentrations. Probably acts by releasing the RNAP, when it is trapped or immobilized on tightly supercoiled DNA. Does not activate transcription on linear DNA. Probably not involved in DNA repair. The protein is RNA polymerase-associated protein RapA of Pseudomonas fluorescens (strain SBW25).